A 1775-amino-acid polypeptide reads, in one-letter code: Atrochrysone carboxylic acid synthase (1775 aa).

Positions 35 to 262 (LRRLQALSKD…YAKWASLPIF (228 aa)) constitute a Starter acyltransferase (SAT) domain. Residues 400 to 833 (DSKIAIVGMS…GGNTTMLLEE (434 aa)) form the Ketosynthase family 3 (KS3) domain. Catalysis depends on for beta-ketoacyl synthase activity residues cysteine 573, histidine 708, and histidine 750. The region spanning 934–1244 (FAFTGQGAFY…ENNWNTLADS (311 aa)) is the Malonyl-CoA:ACP transacylase (MAT) domain. The product template (PT) domain stretch occupies residues 1313–1631 (TSSIHQVLQE…RSLLPTFFSP (319 aa)). Positions 1317–1451 (HQVLQEDVTG…SAVVEYGDAN (135 aa)) are N-terminal hotdog fold. In terms of domain architecture, PKS/mFAS DH spans 1317 to 1626 (HQVLQEDVTG…FRRFPRSLLP (310 aa)). Histidine 1349 acts as the Proton acceptor; for dehydratase activity in catalysis. The segment at 1480 to 1626 (AAVLPRNMAY…FRRFPRSLLP (147 aa)) is C-terminal hotdog fold. The active-site Proton donor; for dehydratase activity is the aspartate 1537. The segment at 1671 to 1697 (TAAPVPAPAPVPAKRAEPAPAAAQAAA) is disordered. Residues 1688 to 1697 (PAPAAAQAAA) show a composition bias toward low complexity. In terms of domain architecture, Carrier spans 1697-1774 (ATQNPTITGA…ELKTYIEETF (78 aa)). Serine 1734 is subject to O-(pantetheine 4'-phosphoryl)serine.

It catalyses the reaction holo-[ACP] + 8 malonyl-CoA + 8 H(+) = atrochrysone carboxyl-[ACP] + 8 CO2 + 8 CoA + 2 H2O. Its pathway is secondary metabolite biosynthesis. Functionally, non-reducing polyketide synthase; part of the gene cluster that mediates the biosynthesis of physcion, a natural anthraquinone fungicide that can prevent plant fungal infections. The pathway begins with the polyketide synthase AcPKS that condenses 8 malonyl-CoA units to synthesize atrochrysone thioester which is released from the synthase by the atrochrysone carboxyl ACP thioesterase AcTE that breaks the thioester bond and leads to free atrochrysone carboxylic acid. Spontaneous decarboxylation of atrochrysone carboxylic acid leads to the formation of atrochrysone. Then, atrochrysone undergoes spontaneous dehydration and oxidation, giving the products emodin anthrone and emodin. The O-methyltransferase AcOMT then methylates the C-6 hydroxyl of emodin to form physcion. This chain is Atrochrysone carboxylic acid synthase, found in Aspergillus chevalieri (Eurotium chevalieri).